Here is a 750-residue protein sequence, read N- to C-terminus: Glycerophosphodiester phosphodiesterase GDPDL7 (750 aa).

The N-terminal stretch at 1–17 (MLRFIIFFSLFIHLCVA) is a signal peptide. GP-PDE domains are found at residues 41 to 339 (PAVV…SQSI) and 355 to 654 (ALVI…TRYL). Asn134, Asn304, Asn603, and Asn716 each carry an N-linked (GlcNAc...) asparagine glycan.

Belongs to the glycerophosphoryl diester phosphodiesterase family. In terms of tissue distribution, expressed in flowers and siliques.

It catalyses the reaction a sn-glycero-3-phosphodiester + H2O = an alcohol + sn-glycerol 3-phosphate + H(+). This is Glycerophosphodiester phosphodiesterase GDPDL7 from Arabidopsis thaliana (Mouse-ear cress).